The sequence spans 420 residues: Glutaryl-CoA dehydrogenase, mitochondrial (420 aa).

A substrate-binding site is contributed by 125 to 126 (RS). Residues 164–167 (FGLT), S173, and 198–200 (WIT) each bind FAD. Residue S173 coordinates substrate. Residues 273-277 (FSCLN) and R280 each bind substrate. Catalysis depends on E400, which acts as the Proton acceptor. FAD contacts are provided by T402 and F420.

The protein belongs to the acyl-CoA dehydrogenase family. FAD is required as a cofactor.

The protein resides in the mitochondrion matrix. The catalysed reaction is glutaryl-CoA + oxidized [electron-transfer flavoprotein] + 2 H(+) = (2E)-butenoyl-CoA + reduced [electron-transfer flavoprotein] + CO2. Its pathway is amino-acid metabolism; lysine degradation. It functions in the pathway amino-acid metabolism; tryptophan metabolism. The polypeptide is Glutaryl-CoA dehydrogenase, mitochondrial (gcdh) (Dictyostelium discoideum (Social amoeba)).